Here is a 712-residue protein sequence, read N- to C-terminus: Ribosomal RNA large subunit methyltransferase K/L (712 aa).

Residues 43–154 (LAYRITLWTR…NGQLTISMNF (112 aa)) enclose the THUMP domain.

The protein belongs to the methyltransferase superfamily. RlmKL family.

The protein resides in the cytoplasm. It carries out the reaction guanosine(2445) in 23S rRNA + S-adenosyl-L-methionine = N(2)-methylguanosine(2445) in 23S rRNA + S-adenosyl-L-homocysteine + H(+). The enzyme catalyses guanosine(2069) in 23S rRNA + S-adenosyl-L-methionine = N(2)-methylguanosine(2069) in 23S rRNA + S-adenosyl-L-homocysteine + H(+). In terms of biological role, specifically methylates the guanine in position 2445 (m2G2445) and the guanine in position 2069 (m7G2069) of 23S rRNA. The chain is Ribosomal RNA large subunit methyltransferase K/L from Shewanella frigidimarina (strain NCIMB 400).